A 784-amino-acid chain; its full sequence is Ribosome biogenesis protein BOP1 homolog (784 aa).

Residues 1 to 11 (MTKKLALKRRG) show a composition bias toward basic residues. A disordered region spans residues 1 to 159 (MTKKLALKRR…DSDTSDEEDI (159 aa)). 4 stretches are compositionally biased toward acidic residues: residues 27-36 (SENEEEEEDL), 45-54 (EDSTDDEGID), 62-73 (SEELQFESDEEG), and 84-111 (AEED…EDEE). Basic and acidic residues-rich tracts occupy residues 112 to 123 (KVSKSKQSDDKP) and 138 to 148 (LPKRDSSKPEY). Positions 149 to 158 (QDSDTSDEED) are enriched in acidic residues. WD repeat units lie at residues 445–486 (GHTD…RTIE), 488–526 (DEVV…KVLV), 570–612 (THFK…SQIP), 615–653 (KSKG…LVKK), 656–695 (TNSK…KPYQ), 699–738 (LHRN…DLLQ), and 754–784 (RDEF…RLYT).

This sequence belongs to the WD repeat BOP1/ERB1 family.

The protein localises to the nucleus. Its subcellular location is the nucleolus. It localises to the nucleoplasm. In terms of biological role, required for maturation of ribosomal RNAs and formation of the large ribosomal subunit. The sequence is that of Ribosome biogenesis protein BOP1 homolog from Drosophila sechellia (Fruit fly).